A 940-amino-acid chain; its full sequence is Valine--tRNA ligase (940 aa).

Residues 47-57 (PNVTGILHMGH) carry the 'HIGH' region motif. Positions 564 to 568 (KLSKS) match the 'KMSKS' region motif. Residue K567 participates in ATP binding. Residues 873–937 (VEHIAKEKTR…ELQSILDKLA (65 aa)) are a coiled coil.

It belongs to the class-I aminoacyl-tRNA synthetase family. ValS type 1 subfamily. As to quaternary structure, monomer.

The protein localises to the cytoplasm. The catalysed reaction is tRNA(Val) + L-valine + ATP = L-valyl-tRNA(Val) + AMP + diphosphate. Functionally, catalyzes the attachment of valine to tRNA(Val). As ValRS can inadvertently accommodate and process structurally similar amino acids such as threonine, to avoid such errors, it has a 'posttransfer' editing activity that hydrolyzes mischarged Thr-tRNA(Val) in a tRNA-dependent manner. The polypeptide is Valine--tRNA ligase (Chlamydia abortus (strain DSM 27085 / S26/3) (Chlamydophila abortus)).